The chain runs to 411 residues: Putative BMP-2-inducible kinase-like protein (411 aa).

3 disordered regions span residues methionine 1–isoleucine 87, serine 215–glutamine 280, and glutamine 392–glutamine 411. Composition is skewed to basic and acidic residues over residues serine 8–glutamate 18 and glutamate 53–tyrosine 68. A coiled-coil region spans residues glutamate 47–methionine 71. 2 stretches are compositionally biased toward basic residues: residues valine 220–arginine 234 and asparagine 243–leucine 258.

The polypeptide is Putative BMP-2-inducible kinase-like protein (BMP2KL) (Homo sapiens (Human)).